A 497-amino-acid chain; its full sequence is Vacuolar-processing enzyme (497 aa).

The signal sequence occupies residues 1–31; sequence METHKSLLFFTNYVLFLVFTLSFLPIPGLLA. H180 is an active-site residue. The active-site Nucleophile is C222. Cysteines 255 and 269 form a disulfide. N-linked (GlcNAc...) asparagine glycans are attached at residues N320 and N374. Disulfide bonds link C433/C463 and C445/C480.

It belongs to the peptidase C13 family.

Asparagine-specific endopeptidase involved in the processing of vacuolar seed protein precursors into the mature forms. The protein is Vacuolar-processing enzyme of Ricinus communis (Castor bean).